The primary structure comprises 106 residues: Large ribosomal subunit protein uL24 (106 aa).

It belongs to the universal ribosomal protein uL24 family. Part of the 50S ribosomal subunit.

Its function is as follows. One of two assembly initiator proteins, it binds directly to the 5'-end of the 23S rRNA, where it nucleates assembly of the 50S subunit. One of the proteins that surrounds the polypeptide exit tunnel on the outside of the subunit. The protein is Large ribosomal subunit protein uL24 of Polaromonas naphthalenivorans (strain CJ2).